A 926-amino-acid chain; its full sequence is MHVKAETVLALLTPAPPSVVGQHVVDLSGDGWTLSSTALNRTVPGHLPSQVHLDLFEAGVIDIMASMILTFVGLRMPIGRIPATRLKAYFESTWLVFDGLDTFATITFCDQHVGSTDNQFRQHHFDVSQILKECKQDPVLRINFGSAPNIANTIAKSPDAEEWPPGVQITNEYPNRWYIRKEQSDFGWDWGPAFAPVGPWKPSYIVQNSHAELYVLNTDIDIYRQGQINYLPPDQSQPWIVNASIDFLGPVPCKPSMSIEIKDAATGSVLSSGLLQNVTVSGKSITGTTTIDGDAPKLWWPSGMGKQNLYNVTITVQNDMKKSLAKVTKRTGFRTIFLNQRNITDDQLAQGIAPGANWHFEINGYEFYAKGSNIIPPDAFWPRVTQARMARLFDAVTAGNQNMLRVWASGAYLHDFIYDLADEKGILLWSEFQFSDALYPVNDAFLENVAAEVVYNVRRVNHHPSLALWAGGNEIESLMLPMARRADPTGYSKYIGEYEKLYISLILPLVYENTRSITYSPSSTTEGYLYVNLSAPVPMAERYSNTTPGSYYGDTDYYNYDTSVSFDYNHYPVGRFANEFGFHSMPSLQTWQQAVDPEDLQFNSSVVVLRNHHYTAGGLFTDNFKNSSKGMGEMTMGVEAYYPIPSKSDSVANFSAWCHATQLFQADLYKSQIQFYRRGSGMPERQLGSLYWQLEDIWQAPTWAGIEYDGRWKVLHYVARDIYQPIIVSPFWNYTTGRLEVYVTSDLWEPAQGTVNLTWVDLSGKSIANNAGTPETVSFTVGALNTTNIYTTNISELSLPDLKDSILILSLSGEGRLPNASSKKAFVHQNHFTPVFPKDLSLKDPKLEVSYSPESRKFTVQATGGVSLYTWLDYPAGAVGYFEANAFVLLPGVPKEVSFVAQEGNVTDDWLQRVTVQSLWDQKVRD.

Residues 1–21 form the signal peptide; the sequence is MHVKAETVLALLTPAPPSVVG. Residues asparagine 40, asparagine 242, asparagine 277, asparagine 311, and asparagine 342 are each glycosylated (N-linked (GlcNAc...) asparagine). Glutamate 474 acts as the Proton donor in catalysis. N-linked (GlcNAc...) asparagine glycosylation is found at asparagine 532, asparagine 603, asparagine 626, asparagine 653, asparagine 733, asparagine 756, asparagine 785, asparagine 793, asparagine 819, and asparagine 905.

This sequence belongs to the glycosyl hydrolase 2 family. Beta-mannosidase A subfamily. As to quaternary structure, homodimer.

The protein resides in the secreted. The catalysed reaction is Hydrolysis of terminal, non-reducing beta-D-mannose residues in beta-D-mannosides.. Its pathway is glycan metabolism; N-glycan degradation. In terms of biological role, exoglycosidase that cleaves the single beta-linked mannose residue from the non-reducing end of beta-mannosidic oligosaccharides of various complexity and length. Involved in the degradation of polymeric mannan and galactomannan. The sequence is that of Beta-mannosidase A (mndA) from Aspergillus fumigatus (strain CBS 144.89 / FGSC A1163 / CEA10) (Neosartorya fumigata).